Consider the following 820-residue polypeptide: Cation/H(+) antiporter 17 (820 aa).

12 helical membrane passes run 30–50 (LPLLILQICIVLLLTRLLAFL), 58–75 (RVIAEIVGGILLGPSALG), 90–110 (LTVLDTLANLGLIFFLFLVGL), 124–144 (ALSIALAGITLPFVLGIGTSF), 159–179 (FLVFMGVALSITAFPVLARIL), 192–212 (IALSAAAVNDVAAWILLALAV), 222–242 (LTSLWVFLSGCGFVLFCIFVV), 276–296 (FVTDFIGIHALFGAFVIGVIF), 313–333 (LVSGLFLPLYFVSSGLKTNVA), 342–362 (GLLVLVIFNACFGKIIGTVLV), 374–394 (LALGFLMNTKGLVELIVLNIG), and 404–424 (IFAIMVLMAIFTTFMTTPLVL). A phosphoserine mark is found at Ser-817 and Ser-819.

The protein belongs to the monovalent cation:proton antiporter 2 (CPA2) transporter (TC 2.A.37) family. CHX (TC 2.A.37.4) subfamily. As to expression, predominantly expressed in epidermal and cortical cells of mature roots but also barely detected in leaves.

It is found in the membrane. Functionally, operates as a K(+)/H(+) antiporter that controls K(+) acquisition and homeostasis. The protein is Cation/H(+) antiporter 17 (CHX17) of Arabidopsis thaliana (Mouse-ear cress).